The chain runs to 585 residues: Potassium-transporting ATPase potassium-binding subunit (585 aa).

The next 12 helical transmembrane spans lie at Ile25 to Ile45, Tyr84 to Met104, Phe152 to Phe172, Ile194 to Val214, Leu275 to Phe295, Val307 to Val327, Ala345 to Ala365, Gly368 to Asn388, Gly397 to Gly417, Leu437 to Pro457, Leu502 to Ala522, and Leu547 to Leu567.

It belongs to the KdpA family. The system is composed of three essential subunits: KdpA, KdpB and KdpC.

It is found in the cell membrane. In terms of biological role, part of the high-affinity ATP-driven potassium transport (or Kdp) system, which catalyzes the hydrolysis of ATP coupled with the electrogenic transport of potassium into the cytoplasm. This subunit binds the extracellular potassium ions and delivers the ions to the membrane domain of KdpB through an intramembrane tunnel. This chain is Potassium-transporting ATPase potassium-binding subunit, found in Thermoplasma volcanium (strain ATCC 51530 / DSM 4299 / JCM 9571 / NBRC 15438 / GSS1).